We begin with the raw amino-acid sequence, 351 residues long: Photosystem II D2 protein (351 aa).

Residues 39–59 (TAYLAIGGWLTGTTFVTSWYT) traverse the membrane as a helical segment. A chlorophyll a-binding site is contributed by histidine 116. A helical transmembrane segment spans residues 123 to 139 (GFMLRQFEIARLVGIRP). Positions 128 and 141 each coordinate pheophytin a. Residues 151 to 164 (VFVSVFLMYPLGQS) traverse the membrane as a helical segment. Histidine 196 provides a ligand contact to chlorophyll a. The chain crosses the membrane as a helical span at residues 206–226 (GALLCAIHGATVENTLFEDGE). Residues histidine 213 and phenylalanine 260 each contribute to the a plastoquinone site. Histidine 213 is a binding site for Fe cation. Residue histidine 267 coordinates Fe cation. Residues 277–293 (GLWTSSIGIIGLALNLR) form a helical membrane-spanning segment.

It belongs to the reaction center PufL/M/PsbA/D family. In terms of assembly, PSII is composed of 1 copy each of membrane proteins PsbA, PsbB, PsbC, PsbD, PsbE, PsbF, PsbH, PsbI, PsbJ, PsbK, PsbL, PsbM, PsbT, PsbX, PsbY, PsbZ, Psb30/Ycf12, peripheral proteins PsbO, CyanoQ (PsbQ), PsbU, PsbV and a large number of cofactors. It forms dimeric complexes. The D1/D2 heterodimer binds P680, chlorophylls that are the primary electron donor of PSII, and subsequent electron acceptors. It shares a non-heme iron and each subunit binds pheophytin, quinone, additional chlorophylls, carotenoids and lipids. There is also a Cl(-1) ion associated with D1 and D2, which is required for oxygen evolution. The PSII complex binds additional chlorophylls, carotenoids and specific lipids. is required as a cofactor.

Its subcellular location is the cellular thylakoid membrane. The enzyme catalyses 2 a plastoquinone + 4 hnu + 2 H2O = 2 a plastoquinol + O2. Functionally, photosystem II (PSII) is a light-driven water:plastoquinone oxidoreductase that uses light energy to abstract electrons from H(2)O, generating O(2) and a proton gradient subsequently used for ATP formation. It consists of a core antenna complex that captures photons, and an electron transfer chain that converts photonic excitation into a charge separation. The D1/D2 (PsbA/PsbD) reaction center heterodimer binds P680, the primary electron donor of PSII as well as several subsequent electron acceptors. D2 is needed for assembly of a stable PSII complex. This is Photosystem II D2 protein from Synechococcus sp. (strain CC9605).